The chain runs to 182 residues: CDP-diacylglycerol--glycerol-3-phosphate 3-phosphatidyltransferase (182 aa).

At 2–12 the chain is on the cytoplasmic side; the sequence is QFNIPTLLTLF. The chain crosses the membrane as a helical span at residues 13 to 37; it reads RVILIPFFVLVFYLPVTWSPFAAAL. Residues 38-60 lie on the Periplasmic side of the membrane; that stretch reads IFCVAAVTDWFDGFLARRWNQST. A helical transmembrane segment spans residues 61-81; that stretch reads RFGAFLDPVADKVLVAIAMVL. The Cytoplasmic portion of the chain corresponds to 82–86; sequence VTEHY. Residues 87–107 form a helical membrane-spanning segment; that stretch reads HSWWVTLPAATMIAREIIISA. Topologically, residues 108-145 are periplasmic; the sequence is LREWMAELGKRSSVAVSWIGKVKTTAQMVALAWLLWRP. Residues 146 to 168 traverse the membrane as a helical segment; that stretch reads NIWVEYAGIALFFVAAVLTLWSM. Residues 169–181 lie on the Cytoplasmic side of the membrane; the sequence is LQYLSAARADLLD.

Belongs to the CDP-alcohol phosphatidyltransferase class-I family.

Its subcellular location is the cell inner membrane. The enzyme catalyses a CDP-1,2-diacyl-sn-glycerol + sn-glycerol 3-phosphate = a 1,2-diacyl-sn-glycero-3-phospho-(1'-sn-glycero-3'-phosphate) + CMP + H(+). The protein operates within phospholipid metabolism; phosphatidylglycerol biosynthesis; phosphatidylglycerol from CDP-diacylglycerol: step 1/2. Its function is as follows. Catalyzes the conversion of cytidine diphosphate diacylglycerol (CDP-DG) and glycerol 3-phosphate into phosphatidylglycerol. Essential for the synthesis of anionic phospholipids, thereby playing a role in balancing the ratio of zwitterionic and anionic phospholipids, which is thought to be important for normal membrane function. This chain is CDP-diacylglycerol--glycerol-3-phosphate 3-phosphatidyltransferase, found in Shigella sonnei (strain Ss046).